Reading from the N-terminus, the 56-residue chain is Small ribosomal subunit protein uS14 (56 aa).

Zn(2+) is bound by residues Cys21, Cys24, Cys39, and Cys42.

The protein belongs to the universal ribosomal protein uS14 family. It depends on Zn(2+) as a cofactor.

This Triticum aestivum (Wheat) protein is Small ribosomal subunit protein uS14 (RPS29).